The sequence spans 219 residues: Deoxyribose-phosphate aldolase 1 (219 aa).

The active-site Proton donor/acceptor is the D87. The active-site Schiff-base intermediate with acetaldehyde is the K149. The active-site Proton donor/acceptor is K178.

It belongs to the DeoC/FbaB aldolase family. DeoC type 1 subfamily.

It is found in the cytoplasm. The catalysed reaction is 2-deoxy-D-ribose 5-phosphate = D-glyceraldehyde 3-phosphate + acetaldehyde. Its pathway is carbohydrate degradation; 2-deoxy-D-ribose 1-phosphate degradation; D-glyceraldehyde 3-phosphate and acetaldehyde from 2-deoxy-alpha-D-ribose 1-phosphate: step 2/2. In terms of biological role, catalyzes a reversible aldol reaction between acetaldehyde and D-glyceraldehyde 3-phosphate to generate 2-deoxy-D-ribose 5-phosphate. The polypeptide is Deoxyribose-phosphate aldolase 1 (Vibrio vulnificus (strain YJ016)).